Consider the following 504-residue polypeptide: Aspartyl/glutamyl-tRNA(Asn/Gln) amidotransferase subunit B (504 aa).

It belongs to the GatB/GatE family. GatB subfamily. As to quaternary structure, heterotrimer of A, B and C subunits.

The enzyme catalyses L-glutamyl-tRNA(Gln) + L-glutamine + ATP + H2O = L-glutaminyl-tRNA(Gln) + L-glutamate + ADP + phosphate + H(+). It carries out the reaction L-aspartyl-tRNA(Asn) + L-glutamine + ATP + H2O = L-asparaginyl-tRNA(Asn) + L-glutamate + ADP + phosphate + 2 H(+). In terms of biological role, allows the formation of correctly charged Asn-tRNA(Asn) or Gln-tRNA(Gln) through the transamidation of misacylated Asp-tRNA(Asn) or Glu-tRNA(Gln) in organisms which lack either or both of asparaginyl-tRNA or glutaminyl-tRNA synthetases. The reaction takes place in the presence of glutamine and ATP through an activated phospho-Asp-tRNA(Asn) or phospho-Glu-tRNA(Gln). The polypeptide is Aspartyl/glutamyl-tRNA(Asn/Gln) amidotransferase subunit B (Tropheryma whipplei (strain Twist) (Whipple's bacillus)).